The chain runs to 180 residues: Adenosine 5'-phosphosulfate reductase (180 aa).

[4Fe-4S] cluster is bound by residues Cys57, Cys58, Cys140, and Cys143. Cys168 functions as the Nucleophile; cysteine thiosulfonate intermediate in the catalytic mechanism.

Belongs to the PAPS reductase family. CysH subfamily. It depends on [4Fe-4S] cluster as a cofactor.

The protein resides in the cytoplasm. It catalyses the reaction [thioredoxin]-disulfide + sulfite + AMP + 2 H(+) = adenosine 5'-phosphosulfate + [thioredoxin]-dithiol. Its pathway is sulfur metabolism; hydrogen sulfide biosynthesis; sulfite from sulfate. In terms of biological role, catalyzes the formation of sulfite from adenosine 5'-phosphosulfate (APS) using thioredoxin as an electron donor. The chain is Adenosine 5'-phosphosulfate reductase from Rhizobium tropici.